Here is a 179-residue protein sequence, read N- to C-terminus: MSKTGTKITFYEDKNFQGRRYDCDCDCSDFHTYLSRCNSIRVEGGTWAVYERPDFAGYMYILPQGDYPEYQRWMGLNDRLSSCRALHLSSGGQYKIQIFEKGDFNGQMYETTEDCPSIMEQFHMREIHSCKVLDGAWIFYELPNYRGRQYLLDKKEYRKPVDWGAVSPAVQSFRRIVES.

Position 2 is an N-acetylserine (Ser2). The tract at residues 2 to 5 is N-terminal arm; it reads SKTG. 2 consecutive Beta/gamma crystallin 'Greek key' domains span residues 6-44 and 45-87; these read TKIT…RVEG and GTWA…RALH. Positions 88–93 are connecting peptide; sequence LSSGGQ. 2 Beta/gamma crystallin 'Greek key' domains span residues 94-134 and 135-177; these read YKIQ…KVLD and GAWI…RRIV.

The protein belongs to the beta/gamma-crystallin family. Monomer.

Functionally, crystallins are the dominant structural components of the vertebrate eye lens. The protein is Gamma-crystallin S (CRYGS) of Oryctolagus cuniculus (Rabbit).